The sequence spans 152 residues: 6,7-dimethyl-8-ribityllumazine synthase (152 aa).

5-amino-6-(D-ribitylamino)uracil is bound by residues phenylalanine 21, alanine 55 to glutamate 57, and cysteine 79 to isoleucine 81. Alanine 84–threonine 85 is a (2S)-2-hydroxy-3-oxobutyl phosphate binding site. The active-site Proton donor is the histidine 87. Phenylalanine 112 is a binding site for 5-amino-6-(D-ribitylamino)uracil. Arginine 126 is a (2S)-2-hydroxy-3-oxobutyl phosphate binding site.

This sequence belongs to the DMRL synthase family. As to quaternary structure, forms an icosahedral capsid composed of 60 subunits, arranged as a dodecamer of pentamers.

The catalysed reaction is (2S)-2-hydroxy-3-oxobutyl phosphate + 5-amino-6-(D-ribitylamino)uracil = 6,7-dimethyl-8-(1-D-ribityl)lumazine + phosphate + 2 H2O + H(+). It participates in cofactor biosynthesis; riboflavin biosynthesis; riboflavin from 2-hydroxy-3-oxobutyl phosphate and 5-amino-6-(D-ribitylamino)uracil: step 1/2. Catalyzes the formation of 6,7-dimethyl-8-ribityllumazine by condensation of 5-amino-6-(D-ribitylamino)uracil with 3,4-dihydroxy-2-butanone 4-phosphate. This is the penultimate step in the biosynthesis of riboflavin. The protein is 6,7-dimethyl-8-ribityllumazine synthase of Staphylococcus haemolyticus (strain JCSC1435).